A 208-amino-acid chain; its full sequence is Imidazoleglycerol-phosphate dehydratase (208 aa).

Belongs to the imidazoleglycerol-phosphate dehydratase family.

Its subcellular location is the cytoplasm. It carries out the reaction D-erythro-1-(imidazol-4-yl)glycerol 3-phosphate = 3-(imidazol-4-yl)-2-oxopropyl phosphate + H2O. It participates in amino-acid biosynthesis; L-histidine biosynthesis; L-histidine from 5-phospho-alpha-D-ribose 1-diphosphate: step 6/9. This chain is Imidazoleglycerol-phosphate dehydratase, found in Mycobacterium sp. (strain JLS).